A 647-amino-acid chain; its full sequence is Exoribonuclease 2 (647 aa).

The RNB domain occupies 191-517 (REDLCALPFV…VNHRLLKALI (327 aa)). Residues 563-645 (PTPFNAEIID…DTRSLIARPF (83 aa)) enclose the S1 motif domain.

The protein belongs to the RNR ribonuclease family. RNase II subfamily.

The protein localises to the cytoplasm. The enzyme catalyses Exonucleolytic cleavage in the 3'- to 5'-direction to yield nucleoside 5'-phosphates.. In terms of biological role, involved in mRNA degradation. Hydrolyzes single-stranded polyribonucleotides processively in the 3' to 5' direction. This chain is Exoribonuclease 2, found in Edwardsiella piscicida.